Reading from the N-terminus, the 752-residue chain is Multifunctional tryptophan biosynthesis protein (752 aa).

In terms of domain architecture, Glutamine amidotransferase type-1 spans 3–202 (FTLLIDNYDS…IQMKGGKWGG (200 aa)). Position 58 to 60 (58 to 60 (GPG)) interacts with L-glutamine. The Nucleophile; for GATase activity role is filled by Cys-86. 136–137 (SL) serves as a coordination point for L-glutamine. Residues His-176 and Glu-178 each act as for GATase activity in the active site. An indole-3-glycerol phosphate synthase region spans residues 231 to 495 (ILNRIHAQRL…DTKAFLRSLI (265 aa)). The tract at residues 509–752 (LVKICGIRST…VEAFVKAVRG (244 aa)) is N-(5'-phosphoribosyl)anthranilate isomerase.

It catalyses the reaction N-(5-phospho-beta-D-ribosyl)anthranilate = 1-(2-carboxyphenylamino)-1-deoxy-D-ribulose 5-phosphate. The catalysed reaction is 1-(2-carboxyphenylamino)-1-deoxy-D-ribulose 5-phosphate + H(+) = (1S,2R)-1-C-(indol-3-yl)glycerol 3-phosphate + CO2 + H2O. The enzyme catalyses chorismate + L-glutamine = anthranilate + pyruvate + L-glutamate + H(+). It participates in amino-acid biosynthesis; L-tryptophan biosynthesis; L-tryptophan from chorismate: step 1/5. It functions in the pathway amino-acid biosynthesis; L-tryptophan biosynthesis; L-tryptophan from chorismate: step 3/5. The protein operates within amino-acid biosynthesis; L-tryptophan biosynthesis; L-tryptophan from chorismate: step 4/5. In terms of biological role, trifunctional enzyme bearing the Gln amidotransferase (GATase) domain of anthranilate synthase, indole-glycerolphosphate synthase, and phosphoribosylanthranilate isomerase activities. The sequence is that of Multifunctional tryptophan biosynthesis protein (TRP1) from Cryptococcus neoformans var. neoformans serotype D (strain B-3501A) (Filobasidiella neoformans).